We begin with the raw amino-acid sequence, 321 residues long: MSKPIQMEKGVKYRDADKMALIPVKNMPTEQKEVLRKPDWMKIKLPADSQRIQDIKSAMRKNNLHSVCEEASCPNLAECFNHGTATFMILGAICTRRCPFCDVAHGRPLPPEAEEPTKLAKTIADMKLKYVVITSVDRDDLRDGGAKHFADCNREIRAQSPHIRIETLVPDFRGRMDVALEALKDNPPDVFNHNLETAPRLYRKVRPGANYQWSLDLLKKFKEQHPDVPTKSGLMMGLGETKEEIVEVLKDLRAHGVTMLTLGQYLAPSRHHLPVERYVPPAEFDELKEIALELGFTHAACGPFVRSSYHADMQAQGLEVK.

[4Fe-4S] cluster-binding residues include C68, C73, C79, C94, C98, C101, and S308. One can recognise a Radical SAM core domain in the interval 80–297; sequence FNHGTATFMI…KEIALELGFT (218 aa).

The protein belongs to the radical SAM superfamily. Lipoyl synthase family. [4Fe-4S] cluster serves as cofactor.

The protein localises to the cytoplasm. The enzyme catalyses [[Fe-S] cluster scaffold protein carrying a second [4Fe-4S](2+) cluster] + N(6)-octanoyl-L-lysyl-[protein] + 2 oxidized [2Fe-2S]-[ferredoxin] + 2 S-adenosyl-L-methionine + 4 H(+) = [[Fe-S] cluster scaffold protein] + N(6)-[(R)-dihydrolipoyl]-L-lysyl-[protein] + 4 Fe(3+) + 2 hydrogen sulfide + 2 5'-deoxyadenosine + 2 L-methionine + 2 reduced [2Fe-2S]-[ferredoxin]. Its pathway is protein modification; protein lipoylation via endogenous pathway; protein N(6)-(lipoyl)lysine from octanoyl-[acyl-carrier-protein]: step 2/2. Its function is as follows. Catalyzes the radical-mediated insertion of two sulfur atoms into the C-6 and C-8 positions of the octanoyl moiety bound to the lipoyl domains of lipoate-dependent enzymes, thereby converting the octanoylated domains into lipoylated derivatives. This is Lipoyl synthase from Vibrio vulnificus (strain CMCP6).